The chain runs to 407 residues: Phosphopentomutase (407 aa).

Mn(2+) is bound by residues Asp-10, Asp-306, His-311, Asp-347, His-348, and His-359.

Belongs to the phosphopentomutase family. The cofactor is Mn(2+).

The protein localises to the cytoplasm. The enzyme catalyses 2-deoxy-alpha-D-ribose 1-phosphate = 2-deoxy-D-ribose 5-phosphate. It catalyses the reaction alpha-D-ribose 1-phosphate = D-ribose 5-phosphate. Its pathway is carbohydrate degradation; 2-deoxy-D-ribose 1-phosphate degradation; D-glyceraldehyde 3-phosphate and acetaldehyde from 2-deoxy-alpha-D-ribose 1-phosphate: step 1/2. In terms of biological role, isomerase that catalyzes the conversion of deoxy-ribose 1-phosphate (dRib-1-P) and ribose 1-phosphate (Rib-1-P) to deoxy-ribose 5-phosphate (dRib-5-P) and ribose 5-phosphate (Rib-5-P), respectively. The chain is Phosphopentomutase from Photorhabdus laumondii subsp. laumondii (strain DSM 15139 / CIP 105565 / TT01) (Photorhabdus luminescens subsp. laumondii).